The following is a 174-amino-acid chain: Eukaryotic translation elongation factor 1 epsilon-1 (174 aa).

The residue at position 2 (alanine 2) is an N-acetylalanine. Positions 2-56 (AAAAELKLLEKSLGLRPGNKYSAQGERQIPVLQTNNGPSLTGLATIATHLVKQAS) are N-terminal. The region spanning 50–173 (HLVKQASKEH…FIKNRLYANS (124 aa)) is the GST C-terminal domain. Residues 57 to 63 (KEHLLGS) form a linker region. Residues 64–152 (TAEEKALVQQ…SRWFCHIQHY (89 aa)) are C-terminal. At lysine 138 the chain carries N6-acetyllysine. A coiled-coil region spans residues 153-169 (PDIRQHLSSVVFIKNRL).

As to quaternary structure, part of a multisubunit complex that groups tRNA ligases for Arg (RARS1), Asp (DARS1), Gln (QARS1), Ile (IARS1), Leu (LARS1), Lys (KARS1), Met (MARS1) the bifunctional ligase for Glu and Pro (EPRS1) and the auxiliary subunits AIMP1/p43, AIMP2/p38 and EEF1E1/p18. Can interact simultaneously with MARS1 and EPRS1. Forms a linear complex that contains MARS1, EEF1E1, EPRS1 and AIMP2 that is at the core of the multisubunit complex. Interacts with ATM and ATR. The interaction with ATM, which takes place independently of TP53, is induced by DNA damage that may occur during genotoxic stress or cell growth. The interaction with ATR is enhanced by UV irradiation.

It localises to the cytoplasm. The protein localises to the nucleus. In terms of biological role, positive modulator of ATM response to DNA damage. This is Eukaryotic translation elongation factor 1 epsilon-1 (EEF1E1) from Cricetulus griseus (Chinese hamster).